A 284-amino-acid chain; its full sequence is Asialoglycoprotein receptor 1 (284 aa).

Residues 1-39 (MTKDYQDFQHLDNENDHHQLQRGPPPAPRLLQRLCSGFR) are Cytoplasmic-facing. The Endocytosis signal motif lies at 5-8 (YQDF). Residue Cys-35 is the site of S-palmitoyl cysteine attachment. A helical; Signal-anchor for type II membrane protein membrane pass occupies residues 40-60 (LFLLSLGLSILLLVVVCVITS). Positions 58–122 (ITSQNSQLRE…EDLREDHSRL (65 aa)) form a coiled coil. Residues 61–284 (QNSQLREDLR…VCETELGKAN (224 aa)) are Extracellular-facing. N-linked (GlcNAc...) asparagine glycans are attached at residues Asn-75, Asn-78, and Asn-146. 3 disulfide bridges follow: Cys-153-Cys-164, Cys-181-Cys-276, and Cys-254-Cys-268. Positions 160-277 (YEGSCYWFSS…CRRPYRWVCE (118 aa)) constitute a C-type lectin domain. The Ca(2+) site is built by Val-190, Glu-196, Asp-215, Gln-239, Asp-241, Asp-242, Glu-252, Asp-253, Asn-264, Asp-265, and Glu-277.

Interacts with LASS2. In terms of processing, phosphorylated on a cytoplasmic Ser residue. Expressed exclusively in hepatic parenchymal cells.

It localises to the membrane. Its function is as follows. Mediates the endocytosis of plasma glycoproteins to which the terminal sialic acid residue on their complex carbohydrate moieties has been removed. The receptor recognizes terminal galactose and N-acetylgalactosamine units. After ligand binding to the receptor, the resulting complex is internalized and transported to a sorting organelle, where receptor and ligand are disassociated. The receptor then returns to the cell membrane surface. This chain is Asialoglycoprotein receptor 1 (Asgr1), found in Rattus norvegicus (Rat).